We begin with the raw amino-acid sequence, 612 residues long: Probable methyltransferase PMT9 (612 aa).

Residues 1–14 (MKHFRTERVRATPK) lie on the Cytoplasmic side of the membrane. A helical; Signal-anchor for type II membrane protein membrane pass occupies residues 15-35 (LFTYVLVGFIALLGLTCLYYG). Residues 36–612 (SSFAPGSRKS…LWSLPAISVS (577 aa)) are Lumenal-facing. N-linked (GlcNAc...) asparagine glycans are attached at residues asparagine 107, asparagine 383, and asparagine 562.

This sequence belongs to the methyltransferase superfamily.

Its subcellular location is the golgi apparatus membrane. This is Probable methyltransferase PMT9 from Arabidopsis thaliana (Mouse-ear cress).